The chain runs to 239 residues: Ribose-5-phosphate isomerase A (239 aa).

Residues 40-43 (SGST), 96-99 (DGAD), and 110-113 (KGGG) each bind substrate. Glu-119 serves as the catalytic Proton acceptor. Residue Lys-137 participates in substrate binding.

It belongs to the ribose 5-phosphate isomerase family. In terms of assembly, homodimer.

The catalysed reaction is aldehydo-D-ribose 5-phosphate = D-ribulose 5-phosphate. Its pathway is carbohydrate degradation; pentose phosphate pathway; D-ribose 5-phosphate from D-ribulose 5-phosphate (non-oxidative stage): step 1/1. In terms of biological role, catalyzes the reversible conversion of ribose-5-phosphate to ribulose 5-phosphate. The protein is Ribose-5-phosphate isomerase A of Methanococcus maripaludis (strain C6 / ATCC BAA-1332).